A 489-amino-acid chain; its full sequence is RNA polymerase II subunit 5-mediating protein homolog (489 aa).

4 disordered regions span residues 141 to 188 (NSDE…MDEE), 200 to 329 (EEKE…EEDE), 396 to 415 (ILKT…SYNE), and 434 to 489 (FENQ…RQNK). The span at 157 to 168 (QKSTTTTTTTTT) shows a compositional bias: low complexity. Composition is skewed to basic and acidic residues over residues 169-188 (SKDK…MDEE) and 215-224 (FNKKFNKKLD). Acidic residues-rich tracts occupy residues 227-265 (GSDE…EDEK), 276-298 (EEDD…EYYD), and 315-329 (QGDD…EEDE). The span at 396-413 (ILKTNSSGNLMSTIPKSY) shows a compositional bias: polar residues. The segment covering 480–489 (SRFKSSRQNK) has biased composition (basic residues).

Belongs to the RNA polymerase II subunit 5-mediating protein family.

It is found in the nucleus. The polypeptide is RNA polymerase II subunit 5-mediating protein homolog (rmp) (Dictyostelium discoideum (Social amoeba)).